The sequence spans 116 residues: Vesicle-associated membrane protein 5 (116 aa).

Over 1–72 (MAGIELERCQ…CWENIRYRIC (72 aa)) the chain is Cytoplasmic. The 61-residue stretch at 5–65 (ELERCQQQAN…QNLAQKKCWE (61 aa)) folds into the v-SNARE coiled-coil homology domain. Phosphoserine is present on residues Ser-41, Ser-48, and Ser-49. The chain crosses the membrane as a helical; Anchor for type IV membrane protein span at residues 73 to 93 (VGLVVVGVLLIILIVLLVVFL). Topologically, residues 94–116 (PQSSDSSSAPRTQDAGIASGPGN) are vesicular. Residues 96–116 (SSDSSSAPRTQDAGIASGPGN) form a disordered region.

This sequence belongs to the synaptobrevin family. (Microbial infection) Targeted and hydrolyzed by C.botulinum neurotoxin type X (BoNT/X) which hydrolyzes the 40-Arg-|-Ser-41 bond and probably inhibits neurotransmitter release. It remains unknown whether BoNT/X is ever produced, or what organisms it targets.

The protein localises to the cell membrane. It is found in the endomembrane system. It localises to the golgi apparatus. The protein resides in the trans-Golgi network membrane. Functionally, may participate in trafficking events that are associated with myogenesis, such as myoblast fusion and/or GLUT4 trafficking. The protein is Vesicle-associated membrane protein 5 (VAMP5) of Homo sapiens (Human).